The chain runs to 363 residues: Anhydro-N-acetylmuramic acid kinase (363 aa).

An ATP-binding site is contributed by 10 to 17 (GTSLDGLD).

The protein belongs to the anhydro-N-acetylmuramic acid kinase family.

It carries out the reaction 1,6-anhydro-N-acetyl-beta-muramate + ATP + H2O = N-acetyl-D-muramate 6-phosphate + ADP + H(+). It functions in the pathway amino-sugar metabolism; 1,6-anhydro-N-acetylmuramate degradation. Its pathway is cell wall biogenesis; peptidoglycan recycling. Catalyzes the specific phosphorylation of 1,6-anhydro-N-acetylmuramic acid (anhMurNAc) with the simultaneous cleavage of the 1,6-anhydro ring, generating MurNAc-6-P. Is required for the utilization of anhMurNAc either imported from the medium or derived from its own cell wall murein, and thus plays a role in cell wall recycling. The chain is Anhydro-N-acetylmuramic acid kinase from Pseudomonas fluorescens (strain Pf0-1).